The following is a 418-amino-acid chain: Gamma-glutamyl phosphate reductase (418 aa).

The protein belongs to the gamma-glutamyl phosphate reductase family.

The protein localises to the cytoplasm. It catalyses the reaction L-glutamate 5-semialdehyde + phosphate + NADP(+) = L-glutamyl 5-phosphate + NADPH + H(+). The protein operates within amino-acid biosynthesis; L-proline biosynthesis; L-glutamate 5-semialdehyde from L-glutamate: step 2/2. Functionally, catalyzes the NADPH-dependent reduction of L-glutamate 5-phosphate into L-glutamate 5-semialdehyde and phosphate. The product spontaneously undergoes cyclization to form 1-pyrroline-5-carboxylate. This chain is Gamma-glutamyl phosphate reductase, found in Clostridium kluyveri (strain NBRC 12016).